We begin with the raw amino-acid sequence, 89 residues long: Small ribosomal subunit protein uS15 (89 aa).

Belongs to the universal ribosomal protein uS15 family. In terms of assembly, part of the 30S ribosomal subunit. Forms a bridge to the 50S subunit in the 70S ribosome, contacting the 23S rRNA.

Its function is as follows. One of the primary rRNA binding proteins, it binds directly to 16S rRNA where it helps nucleate assembly of the platform of the 30S subunit by binding and bridging several RNA helices of the 16S rRNA. Functionally, forms an intersubunit bridge (bridge B4) with the 23S rRNA of the 50S subunit in the ribosome. The protein is Small ribosomal subunit protein uS15 of Bifidobacterium longum subsp. infantis (strain ATCC 15697 / DSM 20088 / JCM 1222 / NCTC 11817 / S12).